The following is a 330-amino-acid chain: Ketol-acid reductoisomerase (NADP(+)) (330 aa).

A KARI N-terminal Rossmann domain is found at 1-181 (MKVYYEQDAT…GGARSGVIET (181 aa)). Residues 24–27 (YGSQ), Arg47, and 82–85 (DQVQ) contribute to the NADP(+) site. The active site involves His107. Gly133 is an NADP(+) binding site. Residues 182-327 (TFKEETETDL…GKLRGMMPWL (146 aa)) enclose the KARI C-terminal knotted domain. Asp190, Glu194, Glu226, and Glu230 together coordinate Mg(2+). Substrate is bound at residue Ser251.

The protein belongs to the ketol-acid reductoisomerase family. Requires Mg(2+) as cofactor.

The catalysed reaction is (2R)-2,3-dihydroxy-3-methylbutanoate + NADP(+) = (2S)-2-acetolactate + NADPH + H(+). It catalyses the reaction (2R,3R)-2,3-dihydroxy-3-methylpentanoate + NADP(+) = (S)-2-ethyl-2-hydroxy-3-oxobutanoate + NADPH + H(+). Its pathway is amino-acid biosynthesis; L-isoleucine biosynthesis; L-isoleucine from 2-oxobutanoate: step 2/4. It functions in the pathway amino-acid biosynthesis; L-valine biosynthesis; L-valine from pyruvate: step 2/4. Its function is as follows. Involved in the biosynthesis of branched-chain amino acids (BCAA). Catalyzes an alkyl-migration followed by a ketol-acid reduction of (S)-2-acetolactate (S2AL) to yield (R)-2,3-dihydroxy-isovalerate. In the isomerase reaction, S2AL is rearranged via a Mg-dependent methyl migration to produce 3-hydroxy-3-methyl-2-ketobutyrate (HMKB). In the reductase reaction, this 2-ketoacid undergoes a metal-dependent reduction by NADPH to yield (R)-2,3-dihydroxy-isovalerate. This Nitratidesulfovibrio vulgaris (strain DSM 19637 / Miyazaki F) (Desulfovibrio vulgaris) protein is Ketol-acid reductoisomerase (NADP(+)).